The chain runs to 489 residues: Otolin-1-A (489 aa).

The N-terminal stretch at 1 to 23 (MPNILHPFIIIMTLLVVATGNQA) is a signal peptide. A disordered region spans residues 27 to 57 (KTTQWPRMKPTKKPPPRDEGPSKLGSISTTV). Asn-109 carries an N-linked (GlcNAc...) asparagine glycan. The interval 133–335 (GPVGEKGLPG…PGMKGTRGLK (203 aa)) is disordered. Gly residues predominate over residues 142-151 (GIPGGKGEMG). Collagen-like domains follow at residues 145–204 (GGKG…KGDK), 205–255 (GDTG…KGDK), and 264–323 (GQKG…PGQR). The span at 192–206 (QGEKGESGPKGDKGD) shows a compositional bias: basic and acidic residues. Asn-225 carries N-linked (GlcNAc...) asparagine glycosylation. Gly residues predominate over residues 226–235 (GTKGGMGEPG). A compositionally biased stretch (basic and acidic residues) spans 248–257 (IKGEKGDKGD). An N-linked (GlcNAc...) asparagine glycan is attached at Asn-287. The span at 290–310 (DGLPGSKGPKGDPGPLSKQGE) shows a compositional bias: low complexity. A C1q domain is found at 351 to 488 (AVQKRSAFSV…GFLLYADATK (138 aa)). 2 N-linked (GlcNAc...) asparagine glycosylation sites follow: Asn-391 and Asn-396.

Belongs to the OTOL1 family. In terms of assembly, homooligomer; disulfide-linked; probably forms homotrimers. Interacts with otomp.

It is found in the secreted. Its subcellular location is the extracellular space. It localises to the extracellular matrix. Collagen-like protein, which provides an organic scaffold for otoliths onto the sensory epithelium of the inner ear. Acts as a scaffold for biomineralization by sequestering calcium. In Danio rerio (Zebrafish), this protein is Otolin-1-A (otol1a).